The primary structure comprises 359 residues: Ras association domain-containing protein 7 (359 aa).

Residues 6 to 89 (VAMELKVWVD…VQFVLRRTGP (84 aa)) enclose the Ras-associating domain. The tract at residues 87–123 (TGPSLSGRPSSDNCPPPERCPVRASLPPKPSAIPGRE) is disordered. Residues 89–99 (PSLSGRPSSDN) are compositionally biased toward polar residues. Coiled coils occupy residues 180 to 208 (WEQE…TAEH) and 242 to 301 (AAER…QQFI). The disordered stretch occupies residues 339 to 359 (SHILVSSLSPEVPPMRQSSWR).

Interacts with MAP2K7 and GTP-bound NRAS. Polyubiquitinated and degraded by the proteasome upon prolonged stress stimuli.

Its subcellular location is the cytoplasm. It is found in the cytoskeleton. The protein localises to the microtubule organizing center. The protein resides in the centrosome. Functionally, negatively regulates stress-induced JNK activation and apoptosis by promoting MAP2K7 phosphorylation and inhibiting its ability to activate JNK. Following prolonged stress, anti-apoptotic effect stops because of degradation of RASSF7 protein via the ubiquitin-proteasome pathway. Required for the activation of AURKB and chromosomal congression during mitosis where it stimulates microtubule polymerization. The polypeptide is Ras association domain-containing protein 7 (Rassf7) (Mus musculus (Mouse)).